Reading from the N-terminus, the 264-residue chain is 3-methyl-2-oxobutanoate hydroxymethyltransferase (264 aa).

Mg(2+)-binding residues include D45 and D84. Residues 45–46 (DS), D84, and K112 contribute to the 3-methyl-2-oxobutanoate site. E114 is a binding site for Mg(2+). The active-site Proton acceptor is E181.

It belongs to the PanB family. As to quaternary structure, homodecamer; pentamer of dimers. The cofactor is Mg(2+).

It is found in the cytoplasm. The enzyme catalyses 3-methyl-2-oxobutanoate + (6R)-5,10-methylene-5,6,7,8-tetrahydrofolate + H2O = 2-dehydropantoate + (6S)-5,6,7,8-tetrahydrofolate. Its pathway is cofactor biosynthesis; (R)-pantothenate biosynthesis; (R)-pantoate from 3-methyl-2-oxobutanoate: step 1/2. Catalyzes the reversible reaction in which hydroxymethyl group from 5,10-methylenetetrahydrofolate is transferred onto alpha-ketoisovalerate to form ketopantoate. The protein is 3-methyl-2-oxobutanoate hydroxymethyltransferase of Shewanella loihica (strain ATCC BAA-1088 / PV-4).